The sequence spans 277 residues: MPNGSANKLPHVTTRRMLDMKERGEKIAVLTAYDYTMARILDRSGVDAILVGDSASNVFSGHNTTLPITVDEMIYHAKAVVRGVQAETSRAMVIVDMPFMSYQLSPEDAVRNAGKIMKEHECDAVKMEGGKVIAEAVKRITDIGIPVMGHLGLMPQSIYKYGSYKVRAKEGDEAEQLMEDARILEESGAFAIVLEKIPSKLAGEVSRSLTIPTIGIGAGPECDGQVLVINDMLGLNTEFHPRFVRRYADLSSVIEKAVQSYVADVRANSFPSEDESY.

Aspartate 53 and aspartate 96 together coordinate Mg(2+). Residues 53–54 (DS), aspartate 96, and lysine 126 contribute to the 3-methyl-2-oxobutanoate site. Glutamate 128 contacts Mg(2+). The Proton acceptor role is filled by glutamate 195.

It belongs to the PanB family. In terms of assembly, homodecamer; pentamer of dimers. The cofactor is Mg(2+).

It is found in the cytoplasm. It catalyses the reaction 3-methyl-2-oxobutanoate + (6R)-5,10-methylene-5,6,7,8-tetrahydrofolate + H2O = 2-dehydropantoate + (6S)-5,6,7,8-tetrahydrofolate. It functions in the pathway cofactor biosynthesis; (R)-pantothenate biosynthesis; (R)-pantoate from 3-methyl-2-oxobutanoate: step 1/2. Its function is as follows. Catalyzes the reversible reaction in which hydroxymethyl group from 5,10-methylenetetrahydrofolate is transferred onto alpha-ketoisovalerate to form ketopantoate. This is 3-methyl-2-oxobutanoate hydroxymethyltransferase from Chlorobaculum parvum (strain DSM 263 / NCIMB 8327) (Chlorobium vibrioforme subsp. thiosulfatophilum).